The sequence spans 137 residues: MRIMGLDVGDKTIGVALSDPLGWTAQGLEVIRRDTIEKDMNRLAQIISEYSVERILVGMPKNMNGTVGSQGEKVLAFIEKVKEKIDLPIKTWDERLSTVAAEKMLIQADVSRGKRKKVIDKMAAAVILQGYLDSGAK.

Belongs to the YqgF nuclease family.

The protein localises to the cytoplasm. Could be a nuclease involved in processing of the 5'-end of pre-16S rRNA. The polypeptide is Putative pre-16S rRNA nuclease (Desulforamulus reducens (strain ATCC BAA-1160 / DSM 100696 / MI-1) (Desulfotomaculum reducens)).